The primary structure comprises 316 residues: L-lactate dehydrogenase 3 (316 aa).

Val16, Asp37, Arg42, and Tyr68 together coordinate NAD(+). Arg91 contacts substrate. NAD(+) is bound by residues Ser104, 121–123, and Thr146; that span reads ASN. 123-126 is a substrate binding site; the sequence is NPVD. 151–154 provides a ligand contact to substrate; that stretch reads DSSR. Residues Arg156 and His171 each contribute to the beta-D-fructose 1,6-bisphosphate site. The active-site Proton acceptor is His178. Position 233 (Thr233) interacts with substrate.

It belongs to the LDH/MDH superfamily. LDH family. As to quaternary structure, homotetramer.

The protein localises to the cytoplasm. The catalysed reaction is (S)-lactate + NAD(+) = pyruvate + NADH + H(+). Its pathway is fermentation; pyruvate fermentation to lactate; (S)-lactate from pyruvate: step 1/1. Its activity is regulated as follows. Allosterically activated by fructose 1,6-bisphosphate (FBP). Its function is as follows. Catalyzes the conversion of lactate to pyruvate. The chain is L-lactate dehydrogenase 3 from Bacillus thuringiensis subsp. konkukian (strain 97-27).